The primary structure comprises 342 residues: Deoxyhypusine synthase regulatory subunit (342 aa).

NAD(+) contacts are provided by residues S72–S76, T98–G100, E104, D213, T282–G283, and D316–A317.

The protein belongs to the deoxyhypusine synthase family. In terms of assembly, heterotetramer formed by a homodimer of the non-catalytic regulatory subunit DHSp and a homodimer of the catalytic subunit DHSc where DHSc appears to bind spermidine and DHSp appears to bind NAD(+).

It functions in the pathway protein modification; eIF5A hypusination. Its function is as follows. Required for the activation and stability of deoxyhypusine synthase DHSc. Required for cell growth and survival. The polypeptide is Deoxyhypusine synthase regulatory subunit (Trypanosoma brucei brucei (strain 927/4 GUTat10.1)).